Consider the following 196-residue polypeptide: MNPASLILLAFAMSTDAFAASIGRGAELRKVRLLSALRIGAVFGVVEAIMPLLGWALGHVAMRFVSGVDHWIAFVMLALLGGHMIWAGVKKEDCAAIKAAETQPENRSIWLIAFTALATSIDAMAVGITLALTDINIIAASVAIGLATALMVTLGTLLGRAIGTIVGKWAEILGGLILIGIGIAVLYEHLAGLASA.

6 consecutive transmembrane segments (helical) span residues 3–23 (PASL…ASIG), 39–59 (IGAV…ALGH), 67–87 (GVDH…MIWA), 109–129 (IWLI…VGIT), 137–157 (IIAA…LGTL), and 172–192 (ILGG…HLAG).

The protein belongs to the MntP (TC 9.B.29) family.

The protein resides in the cell inner membrane. Functionally, probably functions as a manganese efflux pump. The chain is Putative manganese efflux pump MntP from Chromohalobacter salexigens (strain ATCC BAA-138 / DSM 3043 / CIP 106854 / NCIMB 13768 / 1H11).